Consider the following 430-residue polypeptide: Probable aspartic-type endopeptidase ARB_07403 (430 aa).

Positions 1-17 (MHVSTLLVAVLLPLALS) are cleaved as a signal peptide. Positions 18 to 87 (KPTPRKKTGS…SKATAGSGKE (70 aa)) are cleaved as a propeptide — activation peptide. Residues 66–105 (YHPQHISKLPGNSKATAGSGKEGVESQDEKGEVVNNPTNH) form a disordered region. The segment covering 87–97 (EGVESQDEKGE) has biased composition (basic and acidic residues). Residues 109-427 (FLSPVTIGGQ…DQRGPSISLA (319 aa)) form the Peptidase A1 domain. Residue D125 is part of the active site. N306 carries an N-linked (GlcNAc...) asparagine glycan. D314 is an active-site residue.

The protein belongs to the peptidase A1 family.

It is found in the secreted. In terms of biological role, probable secreted aspartic-type endopeptidase which contributes to virulence. This is Probable aspartic-type endopeptidase ARB_07403 from Arthroderma benhamiae (strain ATCC MYA-4681 / CBS 112371) (Trichophyton mentagrophytes).